We begin with the raw amino-acid sequence, 322 residues long: Quinolinate synthase (322 aa).

Iminosuccinate contacts are provided by histidine 36 and serine 53. A [4Fe-4S] cluster-binding site is contributed by cysteine 98. Iminosuccinate-binding positions include 124–126 and serine 141; that span reads YIN. [4Fe-4S] cluster is bound at residue cysteine 184. Iminosuccinate contacts are provided by residues 210-212 and threonine 227; that span reads HPE. Cysteine 278 provides a ligand contact to [4Fe-4S] cluster.

The protein belongs to the quinolinate synthase family. Type 2 subfamily. Requires [4Fe-4S] cluster as cofactor.

It is found in the cytoplasm. The catalysed reaction is iminosuccinate + dihydroxyacetone phosphate = quinolinate + phosphate + 2 H2O + H(+). The protein operates within cofactor biosynthesis; NAD(+) biosynthesis; quinolinate from iminoaspartate: step 1/1. Functionally, catalyzes the condensation of iminoaspartate with dihydroxyacetone phosphate to form quinolinate. The protein is Quinolinate synthase of Chloroherpeton thalassium (strain ATCC 35110 / GB-78).